The following is a 112-amino-acid chain: M-myrmeciitoxin-Mp1 (112 aa).

The N-terminal stretch at 1 to 26 (MKLSCLLLTLTIIFVLTIVHAPNVEA) is a signal peptide. A propeptide spanning residues 27 to 56 (KDLADPESEAVGFADAFGEADAVGEADPNA) is cleaved from the precursor. The interval 57–78 (GLGSVFGRLARILGRVIPKVAK) is critical for cytotoxic activity. The tract at residues 93 to 106 (KEAIPMAVEMAKSQ) is igE-binding determinant.

It belongs to the formicidae venom precursor-01 superfamily. Ant pilosulin family. Expressed by the venom gland.

The protein resides in the secreted. Has strong cytotoxic and hemolytic activities. Is more potent against mononuclear leukocytes than against granulocytes. The synthesized peptide 57-76 shows a potent and broad spectrum antimicrobial activity against both Gram-positive and Gram-negative bacteria, and also against the fungus C.albicans. Adopts an alpha-helical structure. In Myrmecia pilosula (Jack jumper ant), this protein is M-myrmeciitoxin-Mp1.